A 336-amino-acid chain; its full sequence is Fructose-1,6-bisphosphatase class 1 (336 aa).

Mg(2+) is bound by residues glutamate 90, aspartate 112, leucine 114, and aspartate 115. Substrate is bound by residues 115-118 (DGSS), asparagine 211, and lysine 277. Residue glutamate 283 coordinates Mg(2+).

The protein belongs to the FBPase class 1 family. In terms of assembly, homotetramer. It depends on Mg(2+) as a cofactor.

Its subcellular location is the cytoplasm. It catalyses the reaction beta-D-fructose 1,6-bisphosphate + H2O = beta-D-fructose 6-phosphate + phosphate. It participates in carbohydrate biosynthesis; gluconeogenesis. This chain is Fructose-1,6-bisphosphatase class 1, found in Pseudomonas aeruginosa (strain UCBPP-PA14).